The chain runs to 292 residues: Bis(5'-nucleosyl)-tetraphosphatase, symmetrical (292 aa).

It belongs to the Ap4A hydrolase family.

The catalysed reaction is P(1),P(4)-bis(5'-adenosyl) tetraphosphate + H2O = 2 ADP + 2 H(+). In terms of biological role, hydrolyzes diadenosine 5',5'''-P1,P4-tetraphosphate to yield ADP. This is Bis(5'-nucleosyl)-tetraphosphatase, symmetrical from Yersinia enterocolitica serotype O:8 / biotype 1B (strain NCTC 13174 / 8081).